A 274-amino-acid polypeptide reads, in one-letter code: Undecaprenyl-diphosphatase (274 aa).

7 helical membrane-spanning segments follow: residues 4-24, 46-63, 82-102, 109-129, 184-204, 218-238, and 249-269; these read ILLL…FLPI, LFEI…VWEY, KFIL…LAFG, LFNP…ILWA, ATEF…FYQL, MWAV…RWLL, and FAWY…FGWV.

It belongs to the UppP family.

The protein resides in the cell inner membrane. It carries out the reaction di-trans,octa-cis-undecaprenyl diphosphate + H2O = di-trans,octa-cis-undecaprenyl phosphate + phosphate + H(+). Functionally, catalyzes the dephosphorylation of undecaprenyl diphosphate (UPP). Confers resistance to bacitracin. The protein is Undecaprenyl-diphosphatase of Dechloromonas aromatica (strain RCB).